The primary structure comprises 396 residues: Flavohemoprotein (396 aa).

Residues 1–136 (MLDAQTIATV…LANVFIHREA (136 aa)) form the Globin domain. Position 85 (H85) interacts with heme b. Residues Y95 and E135 each act as charge relay system in the active site. The interval 147-396 (GGWEGTRPFR…YECFGPHKVL (250 aa)) is reductase. The FAD-binding FR-type domain maps to 150–255 (EGTRPFRIVA…AAPAGDFFMN (106 aa)). FAD is bound by residues Y188 and 204 to 207 (RQYS). Residue 268–273 (GVGQTP) participates in NADP(+) binding. Position 389–392 (389–392 (CFGP)) interacts with FAD.

The protein belongs to the globin family. Two-domain flavohemoproteins subfamily. In the C-terminal section; belongs to the flavoprotein pyridine nucleotide cytochrome reductase family. As to quaternary structure, monomer. Heme b is required as a cofactor. FAD serves as cofactor.

It catalyses the reaction 2 nitric oxide + NADPH + 2 O2 = 2 nitrate + NADP(+) + H(+). The catalysed reaction is 2 nitric oxide + NADH + 2 O2 = 2 nitrate + NAD(+) + H(+). Functionally, is involved in NO detoxification in an aerobic process, termed nitric oxide dioxygenase (NOD) reaction that utilizes O(2) and NAD(P)H to convert NO to nitrate, which protects the bacterium from various noxious nitrogen compounds. Therefore, plays a central role in the inducible response to nitrosative stress. In Salmonella typhimurium (strain LT2 / SGSC1412 / ATCC 700720), this protein is Flavohemoprotein (hmp).